Here is a 122-residue protein sequence, read N- to C-terminus: uncharacterized protein (122 aa).

In terms of domain architecture, HIT spans 10–120; it reads VFARILRGEI…AGRRLGPMIT (111 aa). The Histidine triad motif motif lies at 104-108; sequence HLHIH.

This is an uncharacterized protein from Azospirillum brasilense.